A 31-amino-acid chain; its full sequence is Photosystem II reaction center protein T (31 aa).

The chain crosses the membrane as a helical span at residues 3–23 (SVAYIIVLAMALSVLFFAIAF).

Belongs to the PsbT family. As to quaternary structure, PSII is composed of 1 copy each of membrane proteins PsbA, PsbB, PsbC, PsbD, PsbE, PsbF, PsbH, PsbI, PsbJ, PsbK, PsbL, PsbM, PsbT, PsbX, PsbY, PsbZ, Psb30/Ycf12, peripheral proteins PsbO, CyanoQ (PsbQ), PsbU, PsbV and a large number of cofactors. It forms dimeric complexes.

It localises to the cellular thylakoid membrane. Its function is as follows. Found at the monomer-monomer interface of the photosystem II (PS II) dimer, plays a role in assembly and dimerization of PSII. PSII is a light-driven water plastoquinone oxidoreductase, using light energy to abstract electrons from H(2)O, generating a proton gradient subsequently used for ATP formation. The sequence is that of Photosystem II reaction center protein T from Picosynechococcus sp. (strain ATCC 27264 / PCC 7002 / PR-6) (Agmenellum quadruplicatum).